Here is a 562-residue protein sequence, read N- to C-terminus: Restriction of telomere capping protein 5 (562 aa).

Residues 1-21 form a disordered region; sequence MGQTPSVESQESKETKNEMPE. Over residues 10-21 the composition is skewed to basic and acidic residues; the sequence is QESKETKNEMPE. Residues 283-509 form the TLDc domain; that stretch reads KLMTYPLVAQ…IRDVEVWGCG (227 aa).

It belongs to the RTC5 family.

It localises to the cytoplasm. In terms of biological role, may be involved in a process influencing telomere capping. The protein is Restriction of telomere capping protein 5 (RTC5) of Vanderwaltozyma polyspora (strain ATCC 22028 / DSM 70294 / BCRC 21397 / CBS 2163 / NBRC 10782 / NRRL Y-8283 / UCD 57-17) (Kluyveromyces polysporus).